The chain runs to 90 residues: Molybdopterin synthase sulfur carrier subunit (90 aa).

1-thioglycine; alternate is present on Gly90. At Gly90 the chain carries Glycyl adenylate; alternate.

The protein belongs to the MoaD family. MOCS2A subfamily. In terms of assembly, heterotetramer; composed of 2 small (Mocs2A) and 2 large (Mocs2B) subunits. C-terminal thiocarboxylation occurs in 2 steps, it is first acyl-adenylated (-COAMP) via the hesA/moeB/thiF part of MOCS3, then thiocarboxylated (-COSH) via the rhodanese domain of MOCS3.

It localises to the cytoplasm. It participates in cofactor biosynthesis; molybdopterin biosynthesis. Acts as a sulfur carrier required for molybdopterin biosynthesis. Component of the molybdopterin synthase complex that catalyzes the conversion of precursor Z into molybdopterin by mediating the incorporation of 2 sulfur atoms into precursor Z to generate a dithiolene group. In the complex, serves as sulfur donor by being thiocarboxylated (-COSH) at its C-terminus by MOCS3. After interaction with Mocs2B, the sulfur is then transferred to precursor Z to form molybdopterin. This Drosophila erecta (Fruit fly) protein is Molybdopterin synthase sulfur carrier subunit.